Consider the following 334-residue polypeptide: Glycerol-3-phosphate dehydrogenase [NAD(P)+] (334 aa).

3 residues coordinate NADPH: Trp13, Arg33, and Lys106. The sn-glycerol 3-phosphate site is built by Lys106, Gly137, and Ser139. Ala141 serves as a coordination point for NADPH. Sn-glycerol 3-phosphate is bound by residues Lys192, Asp245, Ser255, Arg256, and Asn257. Lys192 functions as the Proton acceptor in the catalytic mechanism. Arg256 provides a ligand contact to NADPH. Residues Val280 and Glu282 each contribute to the NADPH site.

It belongs to the NAD-dependent glycerol-3-phosphate dehydrogenase family.

The protein localises to the cytoplasm. It carries out the reaction sn-glycerol 3-phosphate + NAD(+) = dihydroxyacetone phosphate + NADH + H(+). It catalyses the reaction sn-glycerol 3-phosphate + NADP(+) = dihydroxyacetone phosphate + NADPH + H(+). Its pathway is membrane lipid metabolism; glycerophospholipid metabolism. Functionally, catalyzes the reduction of the glycolytic intermediate dihydroxyacetone phosphate (DHAP) to sn-glycerol 3-phosphate (G3P), the key precursor for phospholipid synthesis. The polypeptide is Glycerol-3-phosphate dehydrogenase [NAD(P)+] (Chlamydia trachomatis serovar L2b (strain UCH-1/proctitis)).